Here is a 639-residue protein sequence, read N- to C-terminus: UvrABC system protein C (639 aa).

Residues 20-97 (ERSGVYRMFD…IKKFQPKFNI (78 aa)) form the GIY-YIG domain. The UVR domain maps to 207 to 242 (KELQENLSRKMEELSSQMRFEEAAEIRDRIKALSYV).

The protein belongs to the UvrC family. Interacts with UvrB in an incision complex.

It is found in the cytoplasm. Its function is as follows. The UvrABC repair system catalyzes the recognition and processing of DNA lesions. UvrC both incises the 5' and 3' sides of the lesion. The N-terminal half is responsible for the 3' incision and the C-terminal half is responsible for the 5' incision. The sequence is that of UvrABC system protein C from Rickettsia africae (strain ESF-5).